Reading from the N-terminus, the 1014-residue chain is Nebulette (1014 aa).

The disordered stretch occupies residues 1–24 (MRVPVFEDIKDETEEEKIGEEENE). Residues 9–24 (IKDETEEEKIGEEENE) are compositionally biased toward acidic residues. Nebulin repeat units lie at residues 29–63 (FYKPVIEDLSMELARKCTELISDIRYKEEFKKSKD), 64–99 (KCTFVTDSPMLNHVKNIGAFISEAKYKGTIKADLSN), 100–136 (SLYKRMPATIDSVFAGEVTQLQSEVAYKQKHDAAKGF), 137–172 (SDYAHMKEPPEVKHAMEVNKHQSNISYRKDVQDTHT), 173–205 (YSAELDRPDIKMATQISKIISNAEYKKGQGIMN), 206–241 (KEPAVIGRPDFEHAVEASKLSSQIKYKEKFDNEMKD), 242–278 (KKHHYNPLESASFRQNQLAATLASNVKYKKDIQNMHD), 279–313 (PVSDLPNLLFLDHVLKASKMLSGREYKKLFEENKG), 314–348 (MYHFDADAVEHLHHKGNAVLQSQVKYKEEYEKNKG), 349–385 (KPMLEFVETPSYQASKEAQKMQSEKVYKEDFEKEIKG), 386–422 (RSSLDLDKTPEFLHVKYITNLLREKEYKKDLENEIKG), 423–459 (KGMELNSEVLDIQRAKRASEMASEKEYKKDLESIIKG), 460–496 (KGMQAGTDTLEMQHAKKAAEIASEKDYKRDLETEIKG), 497–533 (KGMQVSTDTLDVQRAKKASEMASQKQYKKDLENEIKG), 534–569 (KGMQVSMDIPDILRAKRTSEIYSQRKYKDEAEKMLS), 570–599 (NYSTIADTPEIQRIKTTQQNISAVFYKKEV), 600–635 (GAGTAVKDSPEIERVKKNQQNISSVKYKEEIKHATA), 636–666 (ISDPPELKRVKENQKNISNLQYKEQNYKATP), 667–693 (VSMTPEIERVRRNQEQLSAVKYKGELQ), 694–728 (RGTAISDPPELKRAKENQKNISNVYYRGQLGRATT), 729–759 (LSVTPEMERVKKNQENISSVKYTQDHKQMKG), 760–794 (RPSLILDTPAMRHVKEAQNHISMVKYHEDFEKTKG), and 795–830 (RGFTPVVDDPVTERVRKNTQVVSDAAYKGVHPHIVE). The residue at position 96 (D96) is an Omega-N-methylarginine. R795 is subject to Omega-N-methylarginine. The tract at residues 836–953 (GIIVDLKVWR…VSSMRSMQHS (118 aa)) is linker. Positions 954 to 1014 (PNLRTYRAMY…LPANYIEFVN (61 aa)) constitute an SH3 domain.

As to quaternary structure, interacts (via nebulin repeats 1-5) with DESM (via rod region). Interacts (via SH3 domain) with XIRP2. In terms of assembly, interacts with ZYX/Zyxin. Abundantly expressed in cardiac muscle, but not in skeletal or smooth muscle. Localized to Z-lines in cardiac cells and to dense bodies in nonmuscle cells. Isoform 2 is expressed in non-muscle cells such as in fibroblasts.

The protein localises to the cytoplasm. Functionally, binds to actin and plays an important role in the assembly of the Z-disk. May functionally link sarcomeric actin to the desmin intermediate filaments in the heart muscle sarcomeres. In terms of biological role, may play a role in the assembly of focal adhesions. In Homo sapiens (Human), this protein is Nebulette.